Reading from the N-terminus, the 265-residue chain is Palmitoyltransferase ZDHHC21 (265 aa).

Topologically, residues 1–16 (MGLRIHFVVDPHGWCC) are cytoplasmic. A helical transmembrane segment spans residues 17-37 (MGLIVFVWLYNFFLIPKIVLF). The Extracellular portion of the chain corresponds to 38-44 (PHYEEGH). Residues 45 to 65 (IPGILIIIFYGIAMFCLVALV) form a helical membrane-spanning segment. Over 66–133 (RASITDPGRL…NNCVGEDNHW (68 aa)) the chain is Cytoplasmic. Residues 90–140 (ELCNKCNLMRPKRSHHCSRCGHCVRRMDHHCPWINNCVGEDNHWLFLQLCF) form the DHHC domain. The active-site S-palmitoyl cysteine intermediate is Cys120. The chain crosses the membrane as a helical span at residues 134 to 154 (LFLQLCFYTELLTCYALMFSF). Residues 155–185 (CHYYYFLPLKKRNLDLFVVRHELAIMRLAAF) lie on the Extracellular side of the membrane. A helical membrane pass occupies residues 186-206 (MGITMLVGITGLFYTQLIGII). Residues 207 to 265 (TDTTSIEKMSNCCEEISRPRKPWQQTFSEVFGTRWKILWFIPFRRRQPLRVPYHFANHV) lie on the Cytoplasmic side of the membrane.

This sequence belongs to the DHHC palmitoyltransferase family.

The protein localises to the golgi apparatus membrane. It localises to the golgi apparatus. The protein resides in the cis-Golgi network membrane. Its subcellular location is the cell membrane. The catalysed reaction is L-cysteinyl-[protein] + hexadecanoyl-CoA = S-hexadecanoyl-L-cysteinyl-[protein] + CoA. In terms of biological role, palmitoyltransferase that catalyzes the addition of palmitate onto various protein substrates. Palmitoylates sex steroid hormone receptors, including ESR1, PGR and AR, thereby regulating their targeting to the plasma membrane. This affects rapid intracellular signaling by sex hormones via ERK and AKT kinases and the generation of cAMP, but does not affect that mediated by their nuclear receptor. Palmitoylates FYN, regulates its localization in hair follicles and plays a key role in epidermal homeostasis and hair follicle differentiation. Through the palmitoylation of PLCB1 and the regulation of PLCB1 downstream signaling may indirectly regulate the function of the endothelial barrier and the adhesion of leukocytes to the endothelium. Also has a palmitoyltransferase activity toward ADRA1D, positively regulating its activity and expression and may thereby play a role in vascular contraction. May also palmitoylate eNOS and LCK. The chain is Palmitoyltransferase ZDHHC21 from Bos taurus (Bovine).